The sequence spans 347 residues: MTQSLLLDAARSKPVARPPVWMMRQAGRYMAEYRALRDKYGFKERCENPDLAVEISLQPFRAFRPDGVIMFSDILTPFDGMGIPFELVESRGPVIDPPIRTREQVEAVRPLDPEASLAFVRTILQTLRREVGEAATVLGFVGAPWTLAAYAVEGKSSKDYALIKQMAFSEPDLLHALLTKFADAIARYVIFQIDSGAQAVQLFDTWAGQLNPADYRAFALPYERRIVEQVRQVHPETPLILYINHSAGLLRHVGESGVDVMSLDWTVDMAEARAILGPDMAVQGNLDPCVLLGDQAQIRSRILDIVEKAGPTGHIMNLGHGILPSTPEDNARFFFETVKSLAPVSAR.

Residues 24 to 28 (RQAGR), Phe42, Asp73, Tyr150, Thr205, and His320 contribute to the substrate site.

Belongs to the uroporphyrinogen decarboxylase family. In terms of assembly, homodimer.

The protein resides in the cytoplasm. It carries out the reaction uroporphyrinogen III + 4 H(+) = coproporphyrinogen III + 4 CO2. It participates in porphyrin-containing compound metabolism; protoporphyrin-IX biosynthesis; coproporphyrinogen-III from 5-aminolevulinate: step 4/4. Its function is as follows. Catalyzes the decarboxylation of four acetate groups of uroporphyrinogen-III to yield coproporphyrinogen-III. The sequence is that of Uroporphyrinogen decarboxylase from Gloeobacter violaceus (strain ATCC 29082 / PCC 7421).